A 928-amino-acid chain; its full sequence is MSLGRYTRLDEIGRGSFATVYQGVHTKTGTYVAIKSVNLSKLNKKLKENLSSEIHILKGLYHPHIVALIDCQETSSHIHLVMEYCALGDLSLFIKRRDTLGDHRYTRDMIAKYPNPPGGALNEVVVRHFLKQLSSALKFLRDRNLIHRDIKPQNLLLCPSPSSYRSGAGSGAATVVPFKGCEDSFNPATGVDSLPLLKIADFGFARSLPATSLAETLCGSPLYMAPEILRYEKYDAKADLWSVGTVLYEMVVGKPPFRATNHVELLRKIEKGEDRIKFPEDNPASDAIKALIRALLKRNPVERLNFPEFFENEVITGPIPGLLADDQPSISRHRSVDPGTTEVPPRPDSRSGTSVPSGTRREREVNREDVYSPRSSPRNQKPSTPPTSTPMRRVGSTDRPPSAPKESEPPMAYPQRPNAVSHATAPGRQELLDRKATTTAIERQRSRNTYSEGSPRLDQPADKLKEEQERAAQDVAFERDYVVVEKRAVEVNAFADELAHSPRIQGGLSRAAQAGAISRRATVQGATPTLSSPQTTTGKAMQVFSGRSRADSTHHRQASYERRYGQSPTSATSAISKALNMASGRLFGMGFSPPLTITKGGRSPPLAYNPFPAYPTAHGSLMIIGDGAKSQVALDEDTKTVQVIEECATRSDVVYGFAEVKYKQLIPLAPSIQTDPSAKSNMSGVRDTAGSTDGDLTVDATVTLSEEALVLYVKALSLLAKSMDIAGVWWTRKNRGETFGDPVMSRADTTGALVGTRINNVVQWVRNRFNEVLEKAEFVRLKLIEGQKRLPPDHPSHPSNHSVTSSLGAGSTDIVVSSGVTAEKLMYDRALEMSRAAAINELTGEDLAGCEIAYVTAIRMLEAVLEDDEVPGLGPGKVDTSKDMYDGVPAEDRQVVVKLVSSIRGRLQALRKKLAILAKRAPTASVNV.

A Protein kinase domain is found at 6–315 (YTRLDEIGRG…FPEFFENEVI (310 aa)). ATP is bound by residues 12–20 (IGRGSFATV) and K35. The active-site Proton acceptor is D149. Disordered regions lie at residues 318 to 470 (PIPG…EQER) and 544 to 571 (FSGR…PTSA). Over residues 359–371 (TRREREVNREDVY) the composition is skewed to basic and acidic residues. The span at 437-452 (TTTAIERQRSRNTYSE) shows a compositional bias: polar residues. Composition is skewed to basic and acidic residues over residues 459-470 (QPADKLKEEQER) and 548-564 (SRAD…ERRY).

The protein belongs to the protein kinase superfamily. Ser/Thr protein kinase family. APG1/unc-51/ULK1 subfamily. In terms of assembly, homodimer. Forms a ternary complex with ATG13 and ATG17.

It localises to the cytoplasm. The protein resides in the preautophagosomal structure membrane. The enzyme catalyses L-seryl-[protein] + ATP = O-phospho-L-seryl-[protein] + ADP + H(+). It catalyses the reaction L-threonyl-[protein] + ATP = O-phospho-L-threonyl-[protein] + ADP + H(+). Functionally, serine/threonine protein kinase involved in the cytoplasm to vacuole transport (Cvt) and found to be essential in autophagy, where it is required for the formation of autophagosomes. Involved in the clearance of protein aggregates which cannot be efficiently cleared by the proteasome. Required for selective autophagic degradation of the nucleus (nucleophagy) as well as for mitophagy which contributes to regulate mitochondrial quantity and quality by eliminating the mitochondria to a basal level to fulfill cellular energy requirements and preventing excess ROS production. Also involved in endoplasmic reticulum-specific autophagic process, in selective removal of ER-associated degradation (ERAD) substrates. Plays a key role in ATG9 and ATG23 cycling through the pre-autophagosomal structure and is necessary to promote ATG18 binding to ATG9 through phosphorylation of ATG9. Catalyzes phosphorylation of ATG4, decreasing the interaction between ATG4 and ATG8 and impairing deconjugation of PE-conjugated forms of ATG8. This chain is Serine/threonine-protein kinase atg1, found in Aspergillus clavatus (strain ATCC 1007 / CBS 513.65 / DSM 816 / NCTC 3887 / NRRL 1 / QM 1276 / 107).